Reading from the N-terminus, the 398-residue chain is Maltoporin (398 aa).

A signal peptide spans 1–30; sequence MTDKNNKRLFKVAPLATAIAASLFTVNASA.

The protein belongs to the porin LamB (TC 1.B.3) family. As to quaternary structure, homotrimer formed of three 18-stranded antiparallel beta-barrels, containing three independent channels.

It is found in the cell outer membrane. The catalysed reaction is beta-maltose(in) = beta-maltose(out). Its function is as follows. Involved in the transport of maltose and maltodextrins. This chain is Maltoporin, found in Hahella chejuensis (strain KCTC 2396).